Consider the following 126-residue polypeptide: LWamide neuropeptides (126 aa).

Positions 1 to 2 (KR) are cleaved as a propeptide — 1. Positions 1–126 (KRQQPGLWGR…KSAIPKAKPQ (126 aa)) are disordered. Tryptophan amide is present on Trp-8. A propeptide spans 11–15 (SADPQ) (2). Residues Trp-20 and Trp-29 each carry the tryptophan amide modification. A propeptide spans 32-36 (SADPQ) (2). Trp-41 and Trp-50 each carry tryptophan amide. Residues 53–57 (SADPQ) constitute a propeptide, 2. 2 positions are modified to tryptophan amide: Trp-62 and Trp-71. Positions 74–78 (SADPQ) are cleaved as a propeptide — 2. Residue Trp-83 is modified to Tryptophan amide. Residues 86 to 93 (SAGSGKRQ) constitute a propeptide, 3. Trp-99 carries the tryptophan amide modification. A propeptide spans 102–126 (SAEPPQYKELEDLKQKSAIPKAKPQ) (4). Over residues 107–116 (QYKELEDLKQ) the composition is skewed to basic and acidic residues.

This sequence belongs to the LWamide neuropeptide family.

The protein resides in the secreted. Functionally, metamorphosin A may be part of an internal signaling system involved in control of metamorphosis. The protein is LWamide neuropeptides of Anemonia sulcata (Mediterranean snakelocks sea anemone).